The sequence spans 325 residues: Putative S-adenosyl-L-methionine-dependent methyltransferase MT0917 (325 aa).

S-adenosyl-L-methionine is bound by residues D126 and 155 to 156 (DL).

It belongs to the UPF0677 family.

Its function is as follows. Exhibits S-adenosyl-L-methionine-dependent methyltransferase activity. The protein is Putative S-adenosyl-L-methionine-dependent methyltransferase MT0917 of Mycobacterium tuberculosis (strain CDC 1551 / Oshkosh).